The following is a 408-amino-acid chain: LL-diaminopimelate aminotransferase (408 aa).

The substrate site is built by Tyr15 and Gly42. Pyridoxal 5'-phosphate is bound by residues Tyr72, 108–109 (SK), Tyr132, Asn187, Tyr218, and 246–248 (SFS). Substrate is bound by residues Lys109, Tyr132, and Asn187. Lys249 carries the N6-(pyridoxal phosphate)lysine modification. Arg257 and Asn291 together coordinate pyridoxal 5'-phosphate. Residues Asn291 and Arg387 each contribute to the substrate site.

This sequence belongs to the class-I pyridoxal-phosphate-dependent aminotransferase family. LL-diaminopimelate aminotransferase subfamily. In terms of assembly, homodimer. Pyridoxal 5'-phosphate serves as cofactor.

The catalysed reaction is (2S,6S)-2,6-diaminopimelate + 2-oxoglutarate = (S)-2,3,4,5-tetrahydrodipicolinate + L-glutamate + H2O + H(+). It functions in the pathway amino-acid biosynthesis; L-lysine biosynthesis via DAP pathway; LL-2,6-diaminopimelate from (S)-tetrahydrodipicolinate (aminotransferase route): step 1/1. Involved in the synthesis of meso-diaminopimelate (m-DAP or DL-DAP), required for both lysine and peptidoglycan biosynthesis. Catalyzes the direct conversion of tetrahydrodipicolinate to LL-diaminopimelate. In Prochlorococcus marinus (strain NATL1A), this protein is LL-diaminopimelate aminotransferase.